The following is a 149-amino-acid chain: 3-dehydroquinate dehydratase (149 aa).

Tyr26 functions as the Proton acceptor in the catalytic mechanism. Substrate-binding residues include Asn77, His83, and Asp90. His103 functions as the Proton donor in the catalytic mechanism. Substrate contacts are provided by residues 104–105 and Arg114; that span reads LS.

Belongs to the type-II 3-dehydroquinase family. As to quaternary structure, homododecamer.

The enzyme catalyses 3-dehydroquinate = 3-dehydroshikimate + H2O. Its pathway is metabolic intermediate biosynthesis; chorismate biosynthesis; chorismate from D-erythrose 4-phosphate and phosphoenolpyruvate: step 3/7. Its function is as follows. Catalyzes a trans-dehydration via an enolate intermediate. This chain is 3-dehydroquinate dehydratase, found in Aeromonas salmonicida (strain A449).